Reading from the N-terminus, the 189-residue chain is Nucleolar protein 16 (189 aa).

The segment covering 1–33 has biased composition (basic residues); sequence MARDVKKRGKPAYTNRRNRQKYLKKKDNKKKLS. Positions 1–34 are disordered; that stretch reads MARDVKKRGKPAYTNRRNRQKYLKKKDNKKKLSK.

Belongs to the NOP16 family.

It localises to the nucleus. The protein localises to the nucleolus. The sequence is that of Nucleolar protein 16 from Caenorhabditis elegans.